The chain runs to 372 residues: tRNA-specific 2-thiouridylase MnmA (372 aa).

ATP-binding positions include 9–16 (GMSGGVDS) and M35. An interaction with target base in tRNA region spans residues 95–97 (NPD). Catalysis depends on C100, which acts as the Nucleophile. A disulfide bridge links C100 with C201. G124 contributes to the ATP binding site. The segment at 151 to 153 (KDQ) is interaction with tRNA. The Cysteine persulfide intermediate role is filled by C201. The interaction with tRNA stretch occupies residues 317–318 (RY).

Belongs to the MnmA/TRMU family.

It is found in the cytoplasm. The catalysed reaction is S-sulfanyl-L-cysteinyl-[protein] + uridine(34) in tRNA + AH2 + ATP = 2-thiouridine(34) in tRNA + L-cysteinyl-[protein] + A + AMP + diphosphate + H(+). In terms of biological role, catalyzes the 2-thiolation of uridine at the wobble position (U34) of tRNA, leading to the formation of s(2)U34. This chain is tRNA-specific 2-thiouridylase MnmA, found in Herminiimonas arsenicoxydans.